The chain runs to 937 residues: Inactive tyrosine-protein kinase transmembrane receptor ROR1 (937 aa).

The N-terminal stretch at 1–29 (MHRPRRRGTRPPPLALLAALLLAARGADA) is a signal peptide. The Extracellular portion of the chain corresponds to 30–406 (QETELSVSAE…KEKNKMEILY (377 aa)). The Ig-like C2-type domain occupies 42 to 141 (PTSSWNTSSE…VATNGKKVVS (100 aa)). N47 and N66 each carry an N-linked (GlcNAc...) asparagine glycan. Intrachain disulfides connect C79–C131, C170–C235, C178–C228, C219–C260, C248–C296, C252–C282, C313–C391, C334–C374, and C362–C386. The FZ domain occupies 165 to 299 (EEDGFCQPYR…SPEAANCIRI (135 aa)). N184 is a glycosylation site (N-linked (GlcNAc...) asparagine). Positions 312-391 (KCYNSTGVDY…KSDLCDIPAC (80 aa)) constitute a Kringle domain. Residue N315 is glycosylated (N-linked (GlcNAc...) asparagine). A helical transmembrane segment spans residues 407-427 (ILVPSVAIPLAIAFLFFFICV). Over 428 to 937 (CRNNQKSSSP…HTESMISAEV (510 aa)) the chain is Cytoplasmic. The Protein kinase domain occupies 473-746 (VRFMEELGEC…PRFKDIHVRL (274 aa)). ATP is bound by residues 479–487 (LGECTFGKI) and K506. Y645 is modified (phosphotyrosine; by autocatalysis). Low complexity predominate over residues 753-762 (SSHTSSTTPS). Disordered regions lie at residues 753 to 778 (SSHT…ASPV), 840 to 890 (GPPR…HMSI), and 916 to 937 (QSSL…SAEV). Over residues 763-778 (GGNATTQTTSLSASPV) the composition is skewed to polar residues. The span at 854-864 (RSPSSASGSTS) shows a compositional bias: low complexity. Over residues 865–880 (TGHVASLPSSGSNQEA) the composition is skewed to polar residues.

This sequence belongs to the protein kinase superfamily. Tyr protein kinase family. ROR subfamily. In terms of assembly, interacts with ERBB2 and IGFBP5. As to expression, at postnatal P0, expressed in heart, lung, liver, kidney, spleen and inner ear.

Its subcellular location is the membrane. It localises to the cell projection. It is found in the axon. Has very low kinase activity in vitro and is unlikely to function as a tyrosine kinase in vivo. Receptor for ligand WNT5A which activate downstream NFkB signaling pathway and may result in the inhibition of WNT3A-mediated signaling. In inner ear, crucial for spiral ganglion neurons to innervate auditory hair cells. Via IGFBP5 ligand, forms a complex with ERBB2 to enhance CREB oncogenic signaling. This Mus musculus (Mouse) protein is Inactive tyrosine-protein kinase transmembrane receptor ROR1 (Ror1).